Here is an 864-residue protein sequence, read N- to C-terminus: Mitochondrial 15S rRNA processing factor CCM1 (864 aa).

The N-terminal 76 residues, 1 to 76 (MYMARCGPKN…REFSNTLKER (76 aa)), are a transit peptide targeting the mitochondrion. Composition is skewed to polar residues over residues 80–94 (TKSVNSDGHQSNSIA) and 102–112 (NVNVTKTSSVP). Residues 80-117 (TKSVNSDGHQSNSIAPISEDSRNVNVTKTSSVPNEEKS) are disordered. PPR repeat units lie at residues 319–353 (NKQNLTTVIQFYSRKEMTKQAWNTFDTMKFLSTKH) and 356–390 (DICTYNTMLRICEKERNFPKALDLFQEIQDHNIKP).

It belongs to the CCM1 family. In terms of assembly, binds to mitochondrial small subunit 15S rRNA.

It localises to the mitochondrion. Functionally, regulates mitochondrial small subunit maturation by controlling 15S rRNA 5'-end processing. Localizes to the 5' precursor of the 15S rRNA in a position that is subsequently occupied by mS47 in the mature yeast mtSSU. Uses structure and sequence-specific RNA recognition, binding to a single-stranded region of the precursor and specifically recognizing bases -6 to -1. The exchange of Ccm1 for mS47 is coupled to the irreversible removal of precursor rRNA that is accompanied by conformational changes of the mitoribosomal proteins uS5m and mS26. These conformational changes signal completion of 5'-end rRNA processing through protection of the mature 5'-end of the 15S rRNA and stabilization of mS47. The removal of the 5' precursor together with the dissociation of Ccm1 may be catalyzed by the 5'-3' exoribonuclease Pet127. Involved in the specific removal of group I introns in mitochondrial encoded transcripts. This Saccharomyces cerevisiae (strain ATCC 204508 / S288c) (Baker's yeast) protein is Mitochondrial 15S rRNA processing factor CCM1.